We begin with the raw amino-acid sequence, 197 residues long: Recombination protein RecR (197 aa).

A C4-type zinc finger spans residues Cys56–Cys71. One can recognise a Toprim domain in the interval Gln79–Pro173.

The protein belongs to the RecR family.

In terms of biological role, may play a role in DNA repair. It seems to be involved in an RecBC-independent recombinational process of DNA repair. It may act with RecF and RecO. In Rippkaea orientalis (strain PCC 8801 / RF-1) (Cyanothece sp. (strain PCC 8801)), this protein is Recombination protein RecR.